Reading from the N-terminus, the 382-residue chain is Pyrimidine monooxygenase RutA (382 aa).

FMN contacts are provided by residues 68 to 69, N134, E143, 159 to 160, and S209; these read IK and RY.

It belongs to the NtaA/SnaA/DszA monooxygenase family. RutA subfamily.

The enzyme catalyses uracil + FMNH2 + NADH + O2 = (Z)-3-ureidoacrylate + FMN + NAD(+) + H2O + H(+). It catalyses the reaction thymine + FMNH2 + NADH + O2 = (Z)-2-methylureidoacrylate + FMN + NAD(+) + H2O + H(+). In terms of biological role, catalyzes the pyrimidine ring opening between N-3 and C-4 by an unusual flavin hydroperoxide-catalyzed mechanism, adding oxygen atoms in the process to yield ureidoacrylate peracid, that immediately reacts with FMN forming ureidoacrylate and FMN-N(5)-oxide. The FMN-N(5)-oxide reacts spontaneously with NADH to produce FMN. Requires the flavin reductase RutF to regenerate FMN in vivo. This chain is Pyrimidine monooxygenase RutA, found in Escherichia coli O81 (strain ED1a).